We begin with the raw amino-acid sequence, 130 residues long: Small ribosomal subunit protein uS11 (130 aa).

This sequence belongs to the universal ribosomal protein uS11 family. In terms of assembly, part of the 30S ribosomal subunit. Interacts with proteins S7 and S18. Binds to IF-3.

Functionally, located on the platform of the 30S subunit, it bridges several disparate RNA helices of the 16S rRNA. Forms part of the Shine-Dalgarno cleft in the 70S ribosome. In Thermosynechococcus vestitus (strain NIES-2133 / IAM M-273 / BP-1), this protein is Small ribosomal subunit protein uS11.